Reading from the N-terminus, the 173-residue chain is NADH-quinone oxidoreductase subunit I 2 (173 aa).

4Fe-4S ferredoxin-type domains follow at residues 41–73 and 83–112; these read IVLT…LAKA and EYFR…LTPD. 8 residues coordinate [4Fe-4S] cluster: C53, C56, C59, C63, C92, C95, C98, and C102. Residues 153–163 show a composition bias toward basic and acidic residues; that stretch reads GKDKGEAEHEA. The interval 153–173 is disordered; sequence GKDKGEAEHEAPPVNLKGLLP.

Belongs to the complex I 23 kDa subunit family. In terms of assembly, NDH-1 is composed of 14 different subunits. Subunits NuoA, H, J, K, L, M, N constitute the membrane sector of the complex. [4Fe-4S] cluster serves as cofactor.

The protein localises to the cell inner membrane. It catalyses the reaction a quinone + NADH + 5 H(+)(in) = a quinol + NAD(+) + 4 H(+)(out). NDH-1 shuttles electrons from NADH, via FMN and iron-sulfur (Fe-S) centers, to quinones in the respiratory chain. The immediate electron acceptor for the enzyme in this species is believed to be ubiquinone. Couples the redox reaction to proton translocation (for every two electrons transferred, four hydrogen ions are translocated across the cytoplasmic membrane), and thus conserves the redox energy in a proton gradient. This is NADH-quinone oxidoreductase subunit I 2 from Rhodopseudomonas palustris (strain ATCC BAA-98 / CGA009).